The chain runs to 256 residues: Thiazole synthase (256 aa).

Lys95 acts as the Schiff-base intermediate with DXP in catalysis. 1-deoxy-D-xylulose 5-phosphate contacts are provided by residues Gly156, 182 to 183, and 204 to 205; these read AG and NT.

This sequence belongs to the ThiG family. In terms of assembly, homotetramer. Forms heterodimers with either ThiH or ThiS.

Its subcellular location is the cytoplasm. It carries out the reaction [ThiS sulfur-carrier protein]-C-terminal-Gly-aminoethanethioate + 2-iminoacetate + 1-deoxy-D-xylulose 5-phosphate = [ThiS sulfur-carrier protein]-C-terminal Gly-Gly + 2-[(2R,5Z)-2-carboxy-4-methylthiazol-5(2H)-ylidene]ethyl phosphate + 2 H2O + H(+). It participates in cofactor biosynthesis; thiamine diphosphate biosynthesis. Its function is as follows. Catalyzes the rearrangement of 1-deoxy-D-xylulose 5-phosphate (DXP) to produce the thiazole phosphate moiety of thiamine. Sulfur is provided by the thiocarboxylate moiety of the carrier protein ThiS. In vitro, sulfur can be provided by H(2)S. The polypeptide is Thiazole synthase (Klebsiella pneumoniae (strain 342)).